The following is a 309-amino-acid chain: tRNA pseudouridine synthase B (309 aa).

Asp-52 functions as the Nucleophile in the catalytic mechanism.

Belongs to the pseudouridine synthase TruB family. Type 1 subfamily.

It carries out the reaction uridine(55) in tRNA = pseudouridine(55) in tRNA. Its function is as follows. Responsible for synthesis of pseudouridine from uracil-55 in the psi GC loop of transfer RNAs. This is tRNA pseudouridine synthase B from Leptospira interrogans serogroup Icterohaemorrhagiae serovar copenhageni (strain Fiocruz L1-130).